Reading from the N-terminus, the 437-residue chain is Transcription factor AP-2-alpha (437 aa).

Lys10 participates in a covalent cross-link: Glycyl lysine isopeptide (Lys-Gly) (interchain with G-Cter in SUMO); alternate. A Glycyl lysine isopeptide (Lys-Gly) (interchain with G-Cter in SUMO2); alternate cross-link involves residue Lys10. Residues 14 to 107 are disordered; the sequence is CEDRHDGTSN…GQRQSQESGL (94 aa). The short motif at 57 to 62 is the PPxY motif element; that stretch reads YFPPPY. Composition is skewed to low complexity over residues 65–74 and 88–101; these read IYPQSQDPYS and QPQP…GQRQ. Glycyl lysine isopeptide (Lys-Gly) (interchain with G-Cter in SUMO2) cross-links involve residues Lys177 and Lys184. Phosphoserine; by PKA is present on Ser239. The interval 280–410 is H-S-H (helix-span-helix), dimerization; it reads RRKAANVTLL…YLTEALKAMD (131 aa). Over residues 414-427 the composition is skewed to polar residues; that stretch reads LSNNPNSHTDNNAK. The interval 414 to 437 is disordered; the sequence is LSNNPNSHTDNNAKSSDKEEKHRK. Basic and acidic residues predominate over residues 428-437; sequence SSDKEEKHRK.

It belongs to the AP-2 family. Binds DNA as a dimer. Can form homodimers or heterodimers with other AP-2 family members. Interacts with WWOX. Interacts with CITED4. Interacts with UBE2I. Interacts with RALBP1 in a complex also containing EPN1 and NUMB during interphase and mitosis. Interacts with KCTD1; this interaction represses transcription activation. Interacts (via C-terminus) with CITED2 (via C-terminus); the interaction stimulates TFAP2A-transcriptional activation. Interacts (via N-terminus) with EP300 (via N-terminus); the interaction requires CITED2. Interacts with KCTD15; this interaction inhibits TFAP2A transcriptional activation. Sumoylated on Lys-10; which inhibits transcriptional activity.

The protein localises to the nucleus. Its function is as follows. Sequence-specific DNA-binding protein that interacts with inducible viral and cellular enhancer elements to regulate transcription of selected genes. AP-2 factors bind to the consensus sequence 5'-GCCNNNGGC-3' and activate genes involved in a large spectrum of important biological functions including proper eye, face, body wall, limb and neural tube development. They also suppress a number of genes including MCAM/MUC18, C/EBP alpha and MYC. AP-2-alpha is the only AP-2 protein required for early morphogenesis of the lens vesicle. Together with the CITED2 coactivator, stimulates the PITX2 P1 promoter transcription activation. Associates with chromatin to the PITX2 P1 promoter region. In Homo sapiens (Human), this protein is Transcription factor AP-2-alpha (TFAP2A).